Here is a 192-residue protein sequence, read N- to C-terminus: Probable nicotinate-nucleotide adenylyltransferase (192 aa).

It belongs to the NadD family.

The enzyme catalyses nicotinate beta-D-ribonucleotide + ATP + H(+) = deamido-NAD(+) + diphosphate. The protein operates within cofactor biosynthesis; NAD(+) biosynthesis; deamido-NAD(+) from nicotinate D-ribonucleotide: step 1/1. Catalyzes the reversible adenylation of nicotinate mononucleotide (NaMN) to nicotinic acid adenine dinucleotide (NaAD). This chain is Probable nicotinate-nucleotide adenylyltransferase, found in Rhizobium leguminosarum bv. trifolii (strain WSM2304).